Consider the following 283-residue polypeptide: Foldase protein PrsA 3 (283 aa).

Positions Met-1 to Ala-21 are cleaved as a signal peptide. A lipid anchor (N-palmitoyl cysteine) is attached at Cys-22. Cys-22 is lipidated: S-diacylglycerol cysteine. The PpiC domain occupies Lys-132 to Asp-222.

The protein belongs to the PrsA family.

The protein localises to the cell membrane. The catalysed reaction is [protein]-peptidylproline (omega=180) = [protein]-peptidylproline (omega=0). Plays a major role in protein secretion by helping the post-translocational extracellular folding of several secreted proteins. Important for the secretion of the protective antigen. The three PsrA proteins in this organism show different but overlapping substrate specificities. The protein is Foldase protein PrsA 3 (prsA3) of Bacillus anthracis.